We begin with the raw amino-acid sequence, 315 residues long: MRKRARIIYNPTSGKELFKRELPDALIKLEKAGYETSAYATEKIGDATLEAERAMHENYDVLIAAGGDGTLNEVVNGIAEKPNRPKLGVIPMGTVNDFGRALHIPNDIMGALDVIIEGHSTKVDIGKMNNRYFINLAAGGQLTQVSYETPSKLKSIVGPFAYYIKGFEMLPQMKAVDLRIEYDGNVFQGEALLFFLGLTNSMAGFEKLVPDAKLDDGYFTLIIVEKSNLAELGHIMTLASRGEHTKHPKVIYEKAKAINISSFTDLQLNVDGEYGGKLPANFLNLERHIDVFAPNDIVNEELINNDHVDDNLIEE.

Residues 1 to 132 enclose the DAGKc domain; sequence MRKRARIIYN…VDIGKMNNRY (132 aa). Residues 10–14, threonine 41, 67–73, and threonine 94 contribute to the ATP site; these read NPTSG and GDGTLNE. Lysine 213, aspartate 216, and tyrosine 218 together coordinate Mg(2+). Glutamate 273 functions as the Proton acceptor in the catalytic mechanism.

It belongs to the diacylglycerol/lipid kinase family. Homodimer. It depends on Mg(2+) as a cofactor.

The enzyme catalyses a 1,2-diacyl-sn-glycerol + ATP = a 1,2-diacyl-sn-glycero-3-phosphate + ADP + H(+). Its function is as follows. Catalyzes the phosphorylation of diacylglycerol (DAG) into phosphatidic acid. Is a key enzyme involved in the production of lipoteichoic acid by reintroducing DAG formed from the breakdown of membrane phospholipids into the phosphatidylglycerol biosynthetic pathway. This is Diacylglycerol kinase (dagK) from Staphylococcus aureus (strain USA300 / TCH1516).